We begin with the raw amino-acid sequence, 600 residues long: Adenine deaminase 3 (600 aa).

It belongs to the metallo-dependent hydrolases superfamily. Adenine deaminase family. It depends on Mn(2+) as a cofactor.

It catalyses the reaction adenine + H2O + H(+) = hypoxanthine + NH4(+). This chain is Adenine deaminase 3, found in Rhizobium johnstonii (strain DSM 114642 / LMG 32736 / 3841) (Rhizobium leguminosarum bv. viciae).